The sequence spans 209 residues: Mitochondrial import inner membrane translocase subunit Tim23 (209 aa).

A run of 3 helical transmembrane segments spans residues 73 to 93 (FELA…FGAV), 125 to 145 (ALWA…GVII), and 180 to 200 (GGLA…WEHI).

The protein belongs to the Tim17/Tim22/Tim23 family. As to quaternary structure, component of the TIM23 complex at least composed of timm23, timm17 and timm50. The complex interacts with the timm44 component of the PAM complex.

The protein localises to the mitochondrion inner membrane. Essential component of the TIM23 complex, a complex that mediates the translocation of transit peptide-containing proteins across the mitochondrial inner membrane. The sequence is that of Mitochondrial import inner membrane translocase subunit Tim23 (timm23) from Xenopus tropicalis (Western clawed frog).